The sequence spans 742 residues: Envelope glycoprotein H (742 aa).

Positions 1–29 (MRPGLPSYLIVLAVCLLSHLLSSRYGAEA) are cleaved as a signal peptide. Residues 30–719 (ISEPLDKAFH…VVDATDSRLL (690 aa)) lie on the Virion surface side of the membrane. Residues asparagine 55, asparagine 62, asparagine 67, and asparagine 192 are each glycosylated (N-linked (GlcNAc...) asparagine; by host). An interaction with gL region spans residues 217–280 (YLIDELRYVK…QTEKHELLVL (64 aa)). N-linked (GlcNAc...) asparagine; by host glycosylation is found at asparagine 641 and asparagine 700. Residues 720–740 (MMSVYALSAIIGIYLLYRMLK) traverse the membrane as a helical segment. Topologically, residues 741–742 (TC) are intravirion.

The protein belongs to the herpesviridae glycoprotein H family. In terms of assembly, interacts with glycoprotein L (gL); this interaction is necessary for the correct processing and cell surface expression of gH. The heterodimer gH/gL seems to interact with gB trimers during fusion. Forms the envelope pentamer complex (PC) composed of gH, gL, UL128, UL130, and UL131A. The pentamer interacts with host NRP2. Forms the envelope trimer complex composed of gH, gL, and gO. The trimer interacts with host PDGFRA. The trimer also interacts with host EPHA2. In terms of processing, N-glycosylated, O-glycosylated, and sialylated.

The protein resides in the virion membrane. It localises to the host cell membrane. Its subcellular location is the host endosome membrane. Functionally, the heterodimer glycoprotein H-glycoprotein L is required for the fusion of viral and plasma membranes leading to virus entry into the host cell. Following initial binding to host receptor, membrane fusion is mediated by the fusion machinery composed of gB and the heterodimer gH/gL. May also be involved in the fusion between the virion envelope and the outer nuclear membrane during virion morphogenesis. In human cytomegalovirus, forms two distincts complexes to mediate viral entry, a trimer and a pentamer at the surface of the virion envelope. The gH-gL-gO trimer is required for infection in fibroblasts by interacting with host PDGFRA, and in glioblastoma cells by interacting with host EPHA2. The gH-gL-UL128-UL130-UL131A pentamer is essential for viral entry in epithelial, endothelial and myeloid cells via interaction with host NRP2. The sequence is that of Envelope glycoprotein H from Human cytomegalovirus (strain Towne) (HHV-5).